The primary structure comprises 143 residues: Sec-independent protein translocase protein TatB (143 aa).

Residues 2 to 22 traverse the membrane as a helical segment; sequence FGNIGWGEFMVLLVAALVILG. The tract at residues 97 to 143 is disordered; it reads FDKPGSVSFDKSNPGTKAVSADPSTPTAPQNKPLAAGERPPIDLDAT.

This sequence belongs to the TatB family. As to quaternary structure, the Tat system comprises two distinct complexes: a TatABC complex, containing multiple copies of TatA, TatB and TatC subunits, and a separate TatA complex, containing only TatA subunits. Substrates initially bind to the TatABC complex, which probably triggers association of the separate TatA complex to form the active translocon.

It is found in the cell membrane. Its function is as follows. Part of the twin-arginine translocation (Tat) system that transports large folded proteins containing a characteristic twin-arginine motif in their signal peptide across membranes. Together with TatC, TatB is part of a receptor directly interacting with Tat signal peptides. TatB may form an oligomeric binding site that transiently accommodates folded Tat precursor proteins before their translocation. In Rhodococcus opacus (strain B4), this protein is Sec-independent protein translocase protein TatB.